Consider the following 524-residue polypeptide: ORC1-type DNA replication protein 4 (524 aa).

The segment covering 1–23 (MTDKSNNPAPASDPSTTETSNDA) has biased composition (polar residues). Positions 1-67 (MTDKSNNPAP…DDPSDEASRG (67 aa)) are disordered. Residues 128 to 132 (TGKTA), tyrosine 325, and arginine 337 each bind ATP.

This sequence belongs to the CDC6/cdc18 family.

In terms of biological role, involved in regulation of DNA replication. This chain is ORC1-type DNA replication protein 4 (cdc6d), found in Haloarcula marismortui (strain ATCC 43049 / DSM 3752 / JCM 8966 / VKM B-1809) (Halobacterium marismortui).